Consider the following 271-residue polypeptide: 3-methyl-2-oxobutanoate hydroxymethyltransferase (271 aa).

Residues aspartate 50 and aspartate 89 each coordinate Mg(2+). Residues 50-51, aspartate 89, and lysine 118 each bind 3-methyl-2-oxobutanoate; that span reads DS. Position 120 (glutamate 120) interacts with Mg(2+). The active-site Proton acceptor is the glutamate 187.

Belongs to the PanB family. Homodecamer; pentamer of dimers. Mg(2+) serves as cofactor.

It localises to the cytoplasm. The enzyme catalyses 3-methyl-2-oxobutanoate + (6R)-5,10-methylene-5,6,7,8-tetrahydrofolate + H2O = 2-dehydropantoate + (6S)-5,6,7,8-tetrahydrofolate. The protein operates within cofactor biosynthesis; (R)-pantothenate biosynthesis; (R)-pantoate from 3-methyl-2-oxobutanoate: step 1/2. Its function is as follows. Catalyzes the reversible reaction in which hydroxymethyl group from 5,10-methylenetetrahydrofolate is transferred onto alpha-ketoisovalerate to form ketopantoate. The chain is 3-methyl-2-oxobutanoate hydroxymethyltransferase from Campylobacter concisus (strain 13826).